The chain runs to 204 residues: uncharacterized protein (204 aa).

Residues 160–180 form a helical membrane-spanning segment; it reads GLTVAAIASVVVAGAVTYLVV.

It to M.pneumoniae MPN_373 C-terminal region.

Its subcellular location is the cell membrane. This is an uncharacterized protein from Mycoplasma pneumoniae (strain ATCC 29342 / M129 / Subtype 1) (Mycoplasmoides pneumoniae).